The sequence spans 431 residues: Adenylosuccinate synthetase (431 aa).

GTP-binding positions include 12-18 (GDEGKGK) and 40-42 (GHT). D13 functions as the Proton acceptor in the catalytic mechanism. Mg(2+)-binding residues include D13 and G40. Residues 13-16 (DEGK), 38-41 (NAGH), T130, R144, Q225, T240, and R304 each bind IMP. H41 serves as the catalytic Proton donor. 300-306 (ATTGRPR) lines the substrate pocket. GTP-binding positions include R306, 332 to 334 (KLD), and 414 to 416 (SVG).

It belongs to the adenylosuccinate synthetase family. In terms of assembly, homodimer. Mg(2+) serves as cofactor.

The protein localises to the cytoplasm. The enzyme catalyses IMP + L-aspartate + GTP = N(6)-(1,2-dicarboxyethyl)-AMP + GDP + phosphate + 2 H(+). It functions in the pathway purine metabolism; AMP biosynthesis via de novo pathway; AMP from IMP: step 1/2. Plays an important role in the de novo pathway of purine nucleotide biosynthesis. Catalyzes the first committed step in the biosynthesis of AMP from IMP. This Geotalea uraniireducens (strain Rf4) (Geobacter uraniireducens) protein is Adenylosuccinate synthetase.